A 366-amino-acid polypeptide reads, in one-letter code: uncharacterized protein (366 aa).

Transmembrane regions (helical) follow at residues 164 to 184 (IPLI…FADI), 188 to 208 (IVVG…RKLL), 223 to 243 (VFPI…IYSL), 256 to 276 (FIGE…LILM), 299 to 319 (FFCL…GEYL), and 325 to 345 (FIMF…LSVI).

The protein to A.fulgidus AF2058.

Its subcellular location is the cell membrane. This is an uncharacterized protein from Methanocaldococcus jannaschii (strain ATCC 43067 / DSM 2661 / JAL-1 / JCM 10045 / NBRC 100440) (Methanococcus jannaschii).